The primary structure comprises 138 residues: MSAQTQRLHPPFYDKRTQRVNSPFSLPAPKTQEKKYLCLLGTVDSVCAPLYDPPLAFTIPQAEVSHMNERNKLLARALYSCVPHVQGSDDYEDDFEDSDFQDGDFDDFEDEDGFDDDDDFEDDDFEYEDEDNDLDFDE.

Residues 89–138 (DDYEDDFEDSDFQDGDFDDFEDEDGFDDDDDFEDDDFEYEDEDNDLDFDE) form a disordered region.

This is an uncharacterized protein from Treponema pallidum (strain Nichols).